The primary structure comprises 347 residues: Nod factor export ATP-binding protein I (347 aa).

The segment covering 1–11 has biased composition (basic and acidic residues); that stretch reads MGENMEREMLR. The segment at 1–32 is disordered; it reads MGENMEREMLRPKTIAMDQNSASARSNPEREI. Residues 17-26 are compositionally biased toward polar residues; that stretch reads MDQNSASARS. Residues 49–279 enclose the ABC transporter domain; it reads IDLQAVTMIY…IIGCPVIEVY (231 aa). 81-88 provides a ligand contact to ATP; it reads GPNGAGKS.

It belongs to the ABC transporter superfamily. Lipooligosaccharide exporter (TC 3.A.1.102) family. As to quaternary structure, the complex is composed of two ATP-binding proteins (NodI) and two transmembrane proteins (NodJ).

It localises to the cell inner membrane. In terms of biological role, part of the ABC transporter complex NodIJ involved in the export of the nodulation factors (Nod factors), the bacterial signal molecules that induce symbiosis and subsequent nodulation induction. Nod factors are LCO (lipo-chitin oligosaccharide), a modified beta-1,4-linked N-acetylglucosamine oligosaccharide. This subunit is responsible for energy coupling to the transport system. This chain is Nod factor export ATP-binding protein I, found in Neorhizobium galegae (Rhizobium galegae).